The sequence spans 158 residues: VIPEGYTQENVAVRGKATQSAQLRGEHAANSEASNAIDGNRDSNFYHGSCTHSSGQANPWWRVDLLQVYTITSVTITNRGDCCGERISGAEINIGQHLASNGVNNPECSVIGSMATGETKTFHCPAPMIGRYVVTYLPTSESLHLCEVEVNVDKPAAA.

The tract at residues 16–148 (KATQSAQLRG…TSESLHLCEV (133 aa)) is F5/8 type C-like. Positions 35, 38, 40, and 49 each coordinate Ca(2+). Disulfide bonds link Cys50–Cys146, Cys82–Cys83, and Cys108–Cys124. The alpha-L-fucose site is built by His52 and Arg79. A Cell attachment site motif is present at residues 79-81 (RGD). Arg86 provides a ligand contact to alpha-L-fucose. Residues Cys146 and Glu147 each contribute to the Ca(2+) site.

This sequence belongs to the fucolectin family. In terms of assembly, homotrimer.

Its subcellular location is the secreted. Its function is as follows. Acts as a defensive agent. Recognizes blood group fucosylated oligosaccharides including A, B, H and Lewis B-type antigens. Does not recognize Lewis A antigen and has low affinity for monovalent haptens. This chain is Fucolectin, found in Anguilla anguilla (European freshwater eel).